The sequence spans 305 residues: Nucleotide-binding protein Rxyl_2009 (305 aa).

Residue 24–31 (GLSGAGKS) coordinates ATP. 75 to 78 (DIRG) provides a ligand contact to GTP.

The protein belongs to the RapZ-like family.

Functionally, displays ATPase and GTPase activities. This chain is Nucleotide-binding protein Rxyl_2009, found in Rubrobacter xylanophilus (strain DSM 9941 / JCM 11954 / NBRC 16129 / PRD-1).